Consider the following 214-residue polypeptide: Probable nicotinate-nucleotide adenylyltransferase (214 aa).

The protein belongs to the NadD family.

It carries out the reaction nicotinate beta-D-ribonucleotide + ATP + H(+) = deamido-NAD(+) + diphosphate. The protein operates within cofactor biosynthesis; NAD(+) biosynthesis; deamido-NAD(+) from nicotinate D-ribonucleotide: step 1/1. Functionally, catalyzes the reversible adenylation of nicotinate mononucleotide (NaMN) to nicotinic acid adenine dinucleotide (NaAD). In Mycobacterium tuberculosis (strain ATCC 25177 / H37Ra), this protein is Probable nicotinate-nucleotide adenylyltransferase.